The following is a 129-amino-acid chain: DNA-directed RNA polymerase III subunit rpc9 (129 aa).

Belongs to the eukaryotic RPC9 RNA polymerase subunit family. As to quaternary structure, component of the RNA polymerase III (Pol III) complex.

It localises to the cytoplasm. It is found in the nucleus. DNA-dependent RNA polymerase catalyzes the transcription of DNA into RNA using the four ribonucleoside triphosphates as substrates. Specific peripheric component of RNA polymerase III which synthesizes small RNAs, such as 5S rRNA and tRNAs. In Schizosaccharomyces pombe (strain 972 / ATCC 24843) (Fission yeast), this protein is DNA-directed RNA polymerase III subunit rpc9 (rpc17).